Reading from the N-terminus, the 445-residue chain is tRNA-2-methylthio-N(6)-dimethylallyladenosine synthase (445 aa).

The MTTase N-terminal domain maps to 3–124 (KKLYIKTYGC…LPELISKVVR (122 aa)). 6 residues coordinate [4Fe-4S] cluster: Cys-12, Cys-48, Cys-87, Cys-162, Cys-166, and Cys-169. The region spanning 148–380 (YTQGASSFIS…QKELATQQLA (233 aa)) is the Radical SAM core domain. Residues 383–445 (ESCVGSTMKV…ALNSLTGEIL (63 aa)) enclose the TRAM domain.

It belongs to the methylthiotransferase family. MiaB subfamily. In terms of assembly, monomer. It depends on [4Fe-4S] cluster as a cofactor.

It is found in the cytoplasm. It carries out the reaction N(6)-dimethylallyladenosine(37) in tRNA + (sulfur carrier)-SH + AH2 + 2 S-adenosyl-L-methionine = 2-methylsulfanyl-N(6)-dimethylallyladenosine(37) in tRNA + (sulfur carrier)-H + 5'-deoxyadenosine + L-methionine + A + S-adenosyl-L-homocysteine + 2 H(+). Its function is as follows. Catalyzes the methylthiolation of N6-(dimethylallyl)adenosine (i(6)A), leading to the formation of 2-methylthio-N6-(dimethylallyl)adenosine (ms(2)i(6)A) at position 37 in tRNAs that read codons beginning with uridine. The sequence is that of tRNA-2-methylthio-N(6)-dimethylallyladenosine synthase from Rickettsia typhi (strain ATCC VR-144 / Wilmington).